We begin with the raw amino-acid sequence, 455 residues long: Membrane-bound lytic murein transglycosylase F (455 aa).

An N-terminal signal peptide occupies residues 1–21 (MPKSAVSLFAILLLAASVITA). Residues 22–264 (CSPQTRPDAM…HIKEQHFGHV (243 aa)) form a non-LT domain region. Residues 265-455 (KQFNYVTTSL…LKYLDEQGRL (191 aa)) are LT domain. Glu309 is an active-site residue.

In the N-terminal section; belongs to the bacterial solute-binding protein 3 family. The protein in the C-terminal section; belongs to the transglycosylase Slt family.

Its subcellular location is the cell outer membrane. The catalysed reaction is Exolytic cleavage of the (1-&gt;4)-beta-glycosidic linkage between N-acetylmuramic acid (MurNAc) and N-acetylglucosamine (GlcNAc) residues in peptidoglycan, from either the reducing or the non-reducing ends of the peptidoglycan chains, with concomitant formation of a 1,6-anhydrobond in the MurNAc residue.. Functionally, murein-degrading enzyme that degrades murein glycan strands and insoluble, high-molecular weight murein sacculi, with the concomitant formation of a 1,6-anhydromuramoyl product. Lytic transglycosylases (LTs) play an integral role in the metabolism of the peptidoglycan (PG) sacculus. Their lytic action creates space within the PG sacculus to allow for its expansion as well as for the insertion of various structures such as secretion systems and flagella. The polypeptide is Membrane-bound lytic murein transglycosylase F (Idiomarina loihiensis (strain ATCC BAA-735 / DSM 15497 / L2-TR)).